The following is a 153-amino-acid chain: Ribosomal RNA large subunit methyltransferase H (153 aa).

Residues leucine 71 and glycine 102 each contribute to the S-adenosyl-L-methionine site.

Belongs to the RNA methyltransferase RlmH family. As to quaternary structure, homodimer.

It localises to the cytoplasm. The catalysed reaction is pseudouridine(1915) in 23S rRNA + S-adenosyl-L-methionine = N(3)-methylpseudouridine(1915) in 23S rRNA + S-adenosyl-L-homocysteine + H(+). Functionally, specifically methylates the pseudouridine at position 1915 (m3Psi1915) in 23S rRNA. The sequence is that of Ribosomal RNA large subunit methyltransferase H from Anaeromyxobacter dehalogenans (strain 2CP-C).